Consider the following 467-residue polypeptide: Xanthan biosynthesis protein XanB (467 aa).

Belongs to the mannose-6-phosphate isomerase type 2 family.

The catalysed reaction is D-mannose 6-phosphate = D-fructose 6-phosphate. It carries out the reaction alpha-D-mannose 1-phosphate + GTP + H(+) = GDP-alpha-D-mannose + diphosphate. The protein operates within nucleotide-sugar biosynthesis; GDP-alpha-D-mannose biosynthesis; GDP-alpha-D-mannose from alpha-D-mannose 1-phosphate (GTP route): step 1/1. Its pathway is nucleotide-sugar biosynthesis; GDP-alpha-D-mannose biosynthesis; alpha-D-mannose 1-phosphate from D-fructose 6-phosphate: step 1/2. Its function is as follows. Involved in xanthan production. This is Xanthan biosynthesis protein XanB (xanB) from Xanthomonas campestris pv. campestris (strain ATCC 33913 / DSM 3586 / NCPPB 528 / LMG 568 / P 25).